Reading from the N-terminus, the 196-residue chain is Glycerol-3-phosphate acyltransferase (196 aa).

The next 4 helical transmembrane spans lie at 4 to 24 (IYIA…GLIL), 70 to 90 (VLIA…LGAF), 111 to 131 (IGVL…LWLA), and 152 to 172 (IFLW…LTLL).

This sequence belongs to the PlsY family. Probably interacts with PlsX.

It is found in the cell inner membrane. It carries out the reaction an acyl phosphate + sn-glycerol 3-phosphate = a 1-acyl-sn-glycero-3-phosphate + phosphate. It functions in the pathway lipid metabolism; phospholipid metabolism. Functionally, catalyzes the transfer of an acyl group from acyl-phosphate (acyl-PO(4)) to glycerol-3-phosphate (G3P) to form lysophosphatidic acid (LPA). This enzyme utilizes acyl-phosphate as fatty acyl donor, but not acyl-CoA or acyl-ACP. The polypeptide is Glycerol-3-phosphate acyltransferase (Rhodopseudomonas palustris (strain BisB5)).